The following is a 222-amino-acid chain: Cytidylate kinase (222 aa).

ATP is bound at residue 7 to 15; it reads GPAGAGKST.

The protein belongs to the cytidylate kinase family. Type 1 subfamily.

Its subcellular location is the cytoplasm. It catalyses the reaction CMP + ATP = CDP + ADP. The enzyme catalyses dCMP + ATP = dCDP + ADP. This Carboxydothermus hydrogenoformans (strain ATCC BAA-161 / DSM 6008 / Z-2901) protein is Cytidylate kinase.